The chain runs to 154 residues: Myoglobin (154 aa).

The Globin domain occupies 2-148 (GLSEAEWQLV…FRKDIAAKYK (147 aa)). Ser-4 carries the post-translational modification Phosphoserine. His-65 is a nitrite binding site. An O2-binding site is contributed by His-65. Phosphothreonine is present on Thr-68. Residue His-94 coordinates heme b.

This sequence belongs to the globin family. Monomeric.

Its subcellular location is the cytoplasm. The protein localises to the sarcoplasm. It carries out the reaction Fe(III)-heme b-[protein] + nitric oxide + H2O = Fe(II)-heme b-[protein] + nitrite + 2 H(+). The enzyme catalyses H2O2 + AH2 = A + 2 H2O. Its function is as follows. Monomeric heme protein which primary function is to store oxygen and facilitate its diffusion within muscle tissues. Reversibly binds oxygen through a pentacoordinated heme iron and enables its timely and efficient release as needed during periods of heightened demand. Depending on the oxidative conditions of tissues and cells, and in addition to its ability to bind oxygen, it also has a nitrite reductase activity whereby it regulates the production of bioactive nitric oxide. Under stress conditions, like hypoxia and anoxia, it also protects cells against reactive oxygen species thanks to its pseudoperoxidase activity. This Ziphius cavirostris (Cuvier's beaked whale) protein is Myoglobin (MB).